The following is an 87-amino-acid chain: Small ribosomal subunit protein bS20 (87 aa).

The protein belongs to the bacterial ribosomal protein bS20 family.

Its function is as follows. Binds directly to 16S ribosomal RNA. This chain is Small ribosomal subunit protein bS20, found in Rhizorhabdus wittichii (strain DSM 6014 / CCUG 31198 / JCM 15750 / NBRC 105917 / EY 4224 / RW1) (Sphingomonas wittichii).